We begin with the raw amino-acid sequence, 453 residues long: Cytochrome P450 monooxygenase PC-20 (453 aa).

A run of 2 helical transmembrane segments spans residues 5–25 and 49–69; these read LGPF…LCVI and LGVV…LFCV. Cysteine 387 is a binding site for heme.

The protein belongs to the cytochrome P450 family. Heme is required as a cofactor.

Its subcellular location is the membrane. It participates in secondary metabolite biosynthesis. In terms of biological role, cytochrome P450 monooxygenase; part of the gene cluster that mediates the biosynthesis of the indole diterpenes penitrems. The geranylgeranyl diphosphate (GGPP) synthase penG catalyzes the first step in penitrem biosynthesis via conversion of farnesyl pyrophosphate and isopentyl pyrophosphate into geranylgeranyl pyrophosphate (GGPP). Condensation of indole-3-glycerol phosphate with GGPP by the prenyl transferase penC then forms 3-geranylgeranylindole (3-GGI). Epoxidation by the FAD-dependent monooxygenase penM leads to a epoxidized-GGI that is substrate of the terpene cyclase penB for cyclization to yield paspaline. Paspaline is subsequently converted to 13-desoxypaxilline by the cytochrome P450 monooxygenase penP, the latter being then converted to paxilline by the cytochrome P450 monooxygenase penQ. Paxilline is converted to beta-paxitriol via C-10 ketoreduction by the short-chain dehydrogenase PC-15 which can be monoprenylated at the C-20 by the indole diterpene prenyltransferase penD. A two-step elimination (acetylation and elimination) process performed by the O-acetyltransferase PC-16 and the P.simplicissimum ptmI-ortholog not yet identified in P.crustosum, leads to the production of the prenylated form of penijanthine. The FAD-linked oxidoreductase ptmO then converts the prenylated form of penijanthine into PC-M5 which is in turn transformed into PC-M4 by the aromatic dimethylallyltransferase PC-22. A series of oxidation steps involving 4 cytochrome P450 monooxygenases (PC-21, PC-05, PC-23, PC-20) and a FAD-dependent monooxygenase (PC-14) are required for the transformation of PC-M4 to penitrems A and E. Synthesis of these final products is proposed to proceed via penitrems D and C (PC-21, PC-05, PC-14) and penitrems B and F (PC-21, PC-05, PC-14, PC-23). In Penicillium crustosum (Blue mold fungus), this protein is Cytochrome P450 monooxygenase PC-20.